Reading from the N-terminus, the 167-residue chain is Crossover junction endodeoxyribonuclease RuvC (167 aa).

Catalysis depends on residues aspartate 11, glutamate 71, and aspartate 143. The Mg(2+) site is built by aspartate 11, glutamate 71, and aspartate 143.

The protein belongs to the RuvC family. In terms of assembly, homodimer which binds Holliday junction (HJ) DNA. The HJ becomes 2-fold symmetrical on binding to RuvC with unstacked arms; it has a different conformation from HJ DNA in complex with RuvA. In the full resolvosome a probable DNA-RuvA(4)-RuvB(12)-RuvC(2) complex forms which resolves the HJ. Mg(2+) is required as a cofactor.

The protein resides in the cytoplasm. It carries out the reaction Endonucleolytic cleavage at a junction such as a reciprocal single-stranded crossover between two homologous DNA duplexes (Holliday junction).. The RuvA-RuvB-RuvC complex processes Holliday junction (HJ) DNA during genetic recombination and DNA repair. Endonuclease that resolves HJ intermediates. Cleaves cruciform DNA by making single-stranded nicks across the HJ at symmetrical positions within the homologous arms, yielding a 5'-phosphate and a 3'-hydroxyl group; requires a central core of homology in the junction. The consensus cleavage sequence is 5'-(A/T)TT(C/G)-3'. Cleavage occurs on the 3'-side of the TT dinucleotide at the point of strand exchange. HJ branch migration catalyzed by RuvA-RuvB allows RuvC to scan DNA until it finds its consensus sequence, where it cleaves and resolves the cruciform DNA. This Acidiphilium cryptum (strain JF-5) protein is Crossover junction endodeoxyribonuclease RuvC.